Consider the following 144-residue polypeptide: uncharacterized protein (144 aa).

The segment covering 125–135 has biased composition (polar residues); sequence PQQQNNHQLQS. The tract at residues 125 to 144 is disordered; that stretch reads PQQQNNHQLQSKPKAASISR.

This is an uncharacterized protein from Rickettsia prowazekii (strain Madrid E).